The sequence spans 325 residues: Glutarate 2-hydroxylase (325 aa).

Residues H160, D162, and H292 each contribute to the Fe cation site.

The protein belongs to the glutarate hydroxylase family. Homotetramer. It depends on Fe(2+) as a cofactor.

The enzyme catalyses glutarate + 2-oxoglutarate + O2 = (S)-2-hydroxyglutarate + succinate + CO2. It functions in the pathway amino-acid degradation. In terms of biological role, acts as an alpha-ketoglutarate-dependent dioxygenase catalyzing hydroxylation of glutarate (GA) to L-2-hydroxyglutarate (L2HG). Functions in a L-lysine degradation pathway that proceeds via cadaverine, glutarate and L-2-hydroxyglutarate. This is Glutarate 2-hydroxylase from Escherichia coli O17:K52:H18 (strain UMN026 / ExPEC).